A 271-amino-acid polypeptide reads, in one-letter code: MASSSSNRSFLHRNANTFLTYPHCPENPEIISQKLWDLVARWNPLYIVCAREAHRDGNMHLHALLQTDKPVRTTDARIFDIEGFHPNIQSAKSVNKVRDYILKEPLAVFERGTFIPRKSCFQGNTPPFPKKNPNKDEIMAHIISHATSKQEYLCLVRKEFPYDWATKLQYFEYSANKLFPDIQEEFISPHPPSSPDLLCNESIKDWLQPNIYQVSPEAYMLLQPTCYTVDEAISDLTWMDNLSSQQMKDQESRASTSSVQQGQGNLLGPEV.

The CRESS-DNA virus Rep endonuclease domain maps to 11–114 (LHRNANTFLT…PLAVFERGTF (104 aa)). The RCR-1 motif lies at 18-21 (FLTY). Residues E52, H60, and H62 each coordinate a divalent metal cation. The RCR-2 signature appears at 60–62 (HLH). Y100 acts as the For DNA cleavage activity in catalysis. The short motif at 100-103 (YILK) is the RCR-3 element. E104 provides a ligand contact to a divalent metal cation. Residues 174–186 (SANKLFPDIQEEF) are oligomerization. Residues 197-201 (LLCNE) form a binding to RBR1 region. Residues 220–229 (MLLQPTCYTV) are transactivation. Positions 244 to 264 (SQQMKDQESRASTSSVQQGQG) are enriched in polar residues. The disordered stretch occupies residues 244–271 (SQQMKDQESRASTSSVQQGQGNLLGPEV).

Belongs to the geminiviridae Rep protein family. In terms of assembly, homooligomer. Interacts with host retinoblastoma-related protein 1 (RBR1), and may thereby deregulate the host cell cycle. Part of the C- and V-complexes which are RepA-Rep-DNA complexes involved in the c-sense and v-sense transcription. It depends on Mg(2+) as a cofactor. Mn(2+) serves as cofactor.

It is found in the host nucleus. The protein localises to the host cytoplasm. In terms of biological role, implicated in enhancement of V-sense gene expression. Acts a an inhibitor of C-sense gene transcription. This chain is Replication-associated protein A, found in Avena sativa (Oat).